The following is a 436-amino-acid chain: Serine protease hepsin (436 aa).

The tract at residues 1–29 is disordered; the sequence is MAKEDEEPGAHRGGSTCSRPQPGKGGRTA. Topologically, residues 1-38 are cytoplasmic; the sequence is MAKEDEEPGAHRGGSTCSRPQPGKGGRTAACCSRPKVA. A helical; Signal-anchor for type II membrane protein membrane pass occupies residues 39 to 59; sequence ALIVGTLLFLTGIGAASWAIV. The Extracellular segment spans residues 60 to 436; sequence TILLQSDQEP…SEASGMVTQP (377 aa). Residues 73 to 170 form the SRCR domain; that stretch reads VQLSPGDSRL…RGRFLTATCQ (98 aa). 8 cysteine pairs are disulfide-bonded: Cys96/Cys159, Cys109/Cys169, Cys138/Cys157, Cys172/Cys296, Cys207/Cys223, Cys310/Cys378, Cys341/Cys357, and Cys368/Cys400. Asn131 carries N-linked (GlcNAc...) asparagine glycosylation. The Peptidase S1 domain occupies 182–424; the sequence is IVGGQDSSLG…FREWIFKAIK (243 aa). Active-site charge relay system residues include His222 and Asp276. Ser372 (charge relay system) is an active-site residue.

The protein belongs to the peptidase S1 family. In terms of tissue distribution, detected in kidney, in thick ascending tubule epithelial cells (at protein level). Detected in kidney and liver.

It localises to the apical cell membrane. It is found in the cell membrane. Its subcellular location is the secreted. It carries out the reaction Cleavage after basic amino-acid residues, with Arg strongly preferred to Lys.. In terms of biological role, serine protease that cleaves extracellular substrates, and contributes to the proteolytic processing of growth factors, such as HGF and MST1/HGFL. Plays a role in cell growth and maintenance of cell morphology. Plays a role in the proteolytic processing of ACE2. Mediates the proteolytic cleavage of urinary UMOD that is required for UMOD polymerization. This Mus musculus (Mouse) protein is Serine protease hepsin (Hpn).